A 241-amino-acid chain; its full sequence is Probable transcriptional regulatory protein PSHAb0060 (241 aa).

It belongs to the TACO1 family.

Its subcellular location is the cytoplasm. This chain is Probable transcriptional regulatory protein PSHAb0060, found in Pseudoalteromonas translucida (strain TAC 125).